Consider the following 27-residue polypeptide: Larval-specific very high density lipoprotein (27 aa).

As to quaternary structure, homodimer. In terms of tissue distribution, hemolymph.

It is found in the secreted. Its subcellular location is the extracellular space. Unknown (it might play a role in lipid transport and/or storage protein metabolism during metamorphosis). This chain is Larval-specific very high density lipoprotein, found in Apis mellifera (Honeybee).